The primary structure comprises 230 residues: Ureidoacrylate amidohydrolase RutB (230 aa).

Catalysis depends on Asp24, which acts as the Proton acceptor. Residue Lys133 is part of the active site. Cys166 serves as the catalytic Nucleophile.

It belongs to the isochorismatase family. RutB subfamily.

The enzyme catalyses (Z)-3-ureidoacrylate + H2O + H(+) = (Z)-3-aminoacrylate + NH4(+) + CO2. It catalyses the reaction (Z)-3-ureidoacrylate + H2O = (Z)-3-aminoacrylate + carbamate + H(+). The catalysed reaction is (Z)-2-methylureidoacrylate + H2O + H(+) = (Z)-2-methylaminoacrylate + NH4(+) + CO2. Its function is as follows. Hydrolyzes ureidoacrylate to form aminoacrylate and carbamate. The carbamate hydrolyzes spontaneously, thereby releasing one of the nitrogen atoms of the pyrimidine ring as ammonia and one of its carbon atoms as CO2. The sequence is that of Ureidoacrylate amidohydrolase RutB from Escherichia coli (strain B / BL21-DE3).